The sequence spans 1072 residues: LRR receptor-like serine/threonine-protein kinase RGI5 (1072 aa).

The first 21 residues, 1 to 21 (MERERSNFFFLFLFCSWVSMA), serve as a signal peptide directing secretion. At 22–706 (QPTLSLSSDG…NGVKSPKIVA (685 aa)) the chain is on the extracellular side. Residues Cys-56 and Cys-63 are joined by a disulfide bond. LRR repeat units lie at residues 66-89 (DNRV…DLSS), 90-113 (LSSL…SFGK), 114-138 (LTHL…LGRL), 140-162 (TLQF…ISNL), 164-185 (ALQV…SFGS), 187-211 (VSLQ…LGFL), 212-234 (KNLT…TFGN), 235-259 (LVNL…LGLC), 260-283 (SELR…LGKL), 285-307 (KITS…ISNC), 308-331 (SSLV…LGKL), 332-355 (VWLE…LSNC), 356-379 (SSLI…IGNL), 381-402 (SLQS…SFGN), 403-427 (CTDL…LFSL), 429-451 (RLSK…VAKC), 452-475 (QSLV…IGEL), 477-499 (NLVF…ISNI), 500-523 (TVLE…LGNL), 524-546 (VNLE…SFGN), 548-571 (SYLN…IKNL), 572-595 (QKLT…LGQV), 597-619 (SLTI…TFSD), 620-642 (LTQL…VLGS), and 643-667 (LTSL…PFFK). Residues Asn-80, Asn-97, and Asn-102 are each glycosylated (N-linked (GlcNAc...) asparagine). A Small peptide recognition motif is present at residues 171-172 (QD). The N-linked (GlcNAc...) asparagine glycan is linked to Asn-176. A Small peptide recognition motif is present at residues 193–196 (RLGG). The N-linked (GlcNAc...) asparagine glycan is linked to Asn-213. 3 consecutive short sequence motifs (small peptide recognition) follow at residues 216-221 (TLGFAA), Tyr-244, and 266-268 (YLH). Asn-306 carries N-linked (GlcNAc...) asparagine glycosylation. 2 consecutive short sequence motifs (small peptide recognition) follow at residues 314–317 (DVSA) and 336–338 (QLQ). The N-linked (GlcNAc...) asparagine glycan is linked to Asn-354. The Small peptide recognition signature appears at 384–388 (SFFLW). N-linked (GlcNAc...) asparagine glycosylation is present at Asn-402. 3 short sequence motifs (small peptide recognition) span residues 410 to 413 (DLSR), 432 to 436 (KLLLL), and 456 to 458 (RLR). Asn-498 is a glycosylation site (N-linked (GlcNAc...) asparagine). An N-linked (GlcNAc...) asparagine glycan is attached at Asn-546. N-linked (GlcNAc...) asparagine glycans are attached at residues Asn-650 and Asn-655. The chain crosses the membrane as a helical span at residues 707–727 (LTAVILASITIAILAAWLLIL). Over 728–1072 (RNNHLYKTSQ…SQPLIKPSSS (345 aa)) the chain is Cytoplasmic. Position 764 is a phosphothreonine (Thr-764). The 296-residue stretch at 772 to 1067 (LTDENVIGKG…EWGKTSQPLI (296 aa)) folds into the Protein kinase domain. Residues 778 to 786 (IGKGCSGIV) and Lys-800 contribute to the ATP site. Tyr-851 and Tyr-887 each carry phosphotyrosine. Asp-900 acts as the Proton acceptor in catalysis. Ser-936 bears the Phosphoserine mark. Phosphotyrosine occurs at positions 944 and 951. Thr-952 carries the post-translational modification Phosphothreonine.

It belongs to the protein kinase superfamily. Ser/Thr protein kinase family. Binds to RGF1; this interaction triggers the formation of heterodimers with SERK1. Post-translationally, phosphorylated and ubiquitinated upon interaction with RGF1, thus leading to activation a subsequent degradation. In terms of processing, autophosphorylated. In terms of tissue distribution, expressed in roots and hypocotyls.

Its subcellular location is the membrane. The catalysed reaction is L-seryl-[protein] + ATP = O-phospho-L-seryl-[protein] + ADP + H(+). It catalyses the reaction L-threonyl-[protein] + ATP = O-phospho-L-threonyl-[protein] + ADP + H(+). Functionally, together with RGI1, RGI2, RGI3 and RGI4, acts as a receptor of RGF1, a peptide hormone that maintains the postembryonic root stem cell niche by regulating the expression levels and patterns of the transcription factor PLETHORA (PLT). Links RGF1 signal with its downstream components. The sequence is that of LRR receptor-like serine/threonine-protein kinase RGI5 from Arabidopsis thaliana (Mouse-ear cress).